Consider the following 268-residue polypeptide: Large ribosomal subunit protein uL3 (268 aa).

An N5-methylglutamine modification is found at glutamine 156. The segment covering valine 242–alanine 259 has biased composition (low complexity). The segment at valine 242–alanine 268 is disordered.

This sequence belongs to the universal ribosomal protein uL3 family. As to quaternary structure, part of the 50S ribosomal subunit. Forms a cluster with proteins L14 and L19. In terms of processing, methylated by PrmB.

One of the primary rRNA binding proteins, it binds directly near the 3'-end of the 23S rRNA, where it nucleates assembly of the 50S subunit. This chain is Large ribosomal subunit protein uL3, found in Maricaulis maris (strain MCS10) (Caulobacter maris).